The sequence spans 221 residues: 6-phosphogluconate phosphatase (221 aa).

D10 serves as the catalytic Nucleophile. 3 residues coordinate Mg(2+): D10, D12, and D167. Residue 10–12 (DCD) participates in substrate binding.

It belongs to the HAD-like hydrolase superfamily. CbbY/CbbZ/Gph/YieH family. Mg(2+) is required as a cofactor. The cofactor is Mn(2+). Co(2+) serves as cofactor. Requires Zn(2+) as cofactor.

In terms of biological role, catalyzes strongly the dephosphorylation of 6-phosphogluconate (6P-Glu) and slightly the dephosphorylation of dihydroxyacetone phosphate (DHAP) and phosphoenolpyruvate (PEP). Also hydrolyzes both purines (GMP and IMP) and pyrimidines as secondary substrates. This Escherichia coli (strain K12) protein is 6-phosphogluconate phosphatase (yieH).